The chain runs to 125 residues: Glycine cleavage system H protein (125 aa).

Residues 22–104 form the Lipoyl-binding domain; the sequence is SYIIGITDFA…YDTGWILKLT (83 aa). Lys-63 bears the N6-lipoyllysine mark.

It belongs to the GcvH family. The glycine cleavage system is composed of four proteins: P, T, L and H. (R)-lipoate serves as cofactor.

Its function is as follows. The glycine cleavage system catalyzes the degradation of glycine. The H protein shuttles the methylamine group of glycine from the P protein to the T protein. In terms of biological role, is also involved in protein lipoylation via its role as an octanoyl/lipoyl carrier protein intermediate. In Listeria innocua serovar 6a (strain ATCC BAA-680 / CLIP 11262), this protein is Glycine cleavage system H protein.